A 932-amino-acid polypeptide reads, in one-letter code: Leucine--tRNA ligase (932 aa).

The short motif at 38-48 is the 'HIGH' region element; it reads PYLNGNLHAGH. The short motif at 630–634 is the 'KMSKS' region element; sequence KMSKS. Lys633 provides a ligand contact to ATP.

It belongs to the class-I aminoacyl-tRNA synthetase family.

Its subcellular location is the cytoplasm. The catalysed reaction is tRNA(Leu) + L-leucine + ATP = L-leucyl-tRNA(Leu) + AMP + diphosphate. In Archaeoglobus fulgidus (strain ATCC 49558 / DSM 4304 / JCM 9628 / NBRC 100126 / VC-16), this protein is Leucine--tRNA ligase.